Consider the following 70-residue polypeptide: Sec-independent protein translocase protein TatA (70 aa).

Residues Met1–Gly21 form a helical membrane-spanning segment. Residues Gly42–Lys70 form a disordered region. Over residues Thr61–Lys70 the composition is skewed to basic and acidic residues.

The protein belongs to the TatA/E family. In terms of assembly, the Tat system comprises two distinct complexes: a TatABC complex, containing multiple copies of TatA, TatB and TatC subunits, and a separate TatA complex, containing only TatA subunits. Substrates initially bind to the TatABC complex, which probably triggers association of the separate TatA complex to form the active translocon.

Its subcellular location is the cell inner membrane. In terms of biological role, part of the twin-arginine translocation (Tat) system that transports large folded proteins containing a characteristic twin-arginine motif in their signal peptide across membranes. TatA could form the protein-conducting channel of the Tat system. The polypeptide is Sec-independent protein translocase protein TatA (Agrobacterium fabrum (strain C58 / ATCC 33970) (Agrobacterium tumefaciens (strain C58))).